A 554-amino-acid chain; its full sequence is MNSNAYLEAQRWLSHPRVKPNLKEVITAMSAEEIEHFFSLKKPSFGTAGVRGKMAPGYHGMNVFSYAYLTQGYVNYIQSLNPTKKPLRFLVARDTRKHGALFNGIVCDVITSMGHVVYMFDNNEPTPTPLVSYVIKKYHFDGGVNVTASHNPKTDNGFKIYDGHGAQLLDFQTDQLIAMLPPVVTMLDFEPRGNNELLHFLDNEVVYKNYFDDLKESLVVDNDSFKNLPVVFTGLHGTSVKLLPRFLTYLGYSNIISVQPQNVFDANFANADHLNPESKDTWELARQYASNTKAKLMMAIDPDADRFAIAEWNPQTQDWHYFSGNESGVMVAYYKLKHKQFKRQPYIVTTVVSTDLVDKIAKKYGAFVKRTNVGFKFIGQAVNHFSKDNELVVAFEEAIGMMASDGLNREKDSFQAAAIMLEIARYCHNKGISLLEFYRGEIFGEFGDYYNWTVPHTIHGVNWKEKMEQVLHQLTTATIKEVVGHKITKIKNYVDINLVEYVLENGNWIKFRISGTEPKLKLYFNLSNGYLAALKHEAKKMHEFLVRLLNLDKA.

Ser-149 functions as the Phosphoserine intermediate in the catalytic mechanism. Ser-149, Asp-301, Asp-303, and Asp-305 together coordinate Mg(2+).

It belongs to the phosphohexose mutase family. The cofactor is Mg(2+).

The catalysed reaction is alpha-D-mannose 1-phosphate = D-mannose 6-phosphate. This is Phosphomannomutase (manB) from Mycoplasma pneumoniae (strain ATCC 29342 / M129 / Subtype 1) (Mycoplasmoides pneumoniae).